The primary structure comprises 180 residues: ATP synthase subunit delta (180 aa).

It belongs to the ATPase delta chain family. As to quaternary structure, F-type ATPases have 2 components, F(1) - the catalytic core - and F(0) - the membrane proton channel. F(1) has five subunits: alpha(3), beta(3), gamma(1), delta(1), epsilon(1). F(0) has three main subunits: a(1), b(2) and c(10-14). The alpha and beta chains form an alternating ring which encloses part of the gamma chain. F(1) is attached to F(0) by a central stalk formed by the gamma and epsilon chains, while a peripheral stalk is formed by the delta and b chains.

Its subcellular location is the cell inner membrane. In terms of biological role, f(1)F(0) ATP synthase produces ATP from ADP in the presence of a proton or sodium gradient. F-type ATPases consist of two structural domains, F(1) containing the extramembraneous catalytic core and F(0) containing the membrane proton channel, linked together by a central stalk and a peripheral stalk. During catalysis, ATP synthesis in the catalytic domain of F(1) is coupled via a rotary mechanism of the central stalk subunits to proton translocation. This protein is part of the stalk that links CF(0) to CF(1). It either transmits conformational changes from CF(0) to CF(1) or is implicated in proton conduction. The protein is ATP synthase subunit delta of Cupriavidus metallidurans (strain ATCC 43123 / DSM 2839 / NBRC 102507 / CH34) (Ralstonia metallidurans).